The following is a 345-amino-acid chain: MATIQLLNIKKQYDNDIFVINDLNLTVADGEFLVIVGPSGCGKSTLLRIIAGLEKVTSGELYIDNELINNREPADRDIAMVFQNYALYPHMTVRGNLEYGLKNRKTPKEDINKRIAHVAKLLEIEPFLDRKPQQLSGGQRQRVAMGRVIVRKPRVFLFDEPLSNLDAKLRAHMCIEIKKLQRSLKTTSLYVTHDQLEAMTLADKMVVMNKGTIEQIGTPMEIYDCPKTIFVADFIGSPPINFLDRQALEKHLGNLFSCSKDTDILAFRPEAILLGEYPDKGPVFHTQIEFIRPIGTGCHVLTRWNDILFTVDIKERLTSDYGQKLNFTVTHQNFHTFNKKTGNRT.

The ABC transporter domain maps to 4–235 (IQLLNIKKQY…PKTIFVADFI (232 aa)). Residue 37–44 (GPSGCGKS) participates in ATP binding.

Belongs to the ABC transporter superfamily. sn-glycerol-3-phosphate importer (TC 3.A.1.1.3) family. The complex is composed of two ATP-binding proteins (UgpC), two transmembrane proteins (UgpA and UgpE) and a solute-binding protein (UgpB).

It localises to the cell inner membrane. It carries out the reaction sn-glycerol 3-phosphate(out) + ATP + H2O = sn-glycerol 3-phosphate(in) + ADP + phosphate + H(+). Part of the ABC transporter complex UgpBAEC involved in sn-glycerol-3-phosphate (G3P) import. Responsible for energy coupling to the transport system. The protein is sn-glycerol-3-phosphate import ATP-binding protein UgpC of Bartonella bacilliformis (strain ATCC 35685 / KC583 / Herrer 020/F12,63).